The primary structure comprises 432 residues: Phosphomethylpyrimidine synthase (432 aa).

Residues N66, M95, Y124, H163, S185–G187, D226–R229, and E265 each bind substrate. Position 269 (H269) interacts with Zn(2+). Residue Y292 coordinates substrate. H333 is a binding site for Zn(2+). C409, C412, and C416 together coordinate [4Fe-4S] cluster.

Belongs to the ThiC family. The cofactor is [4Fe-4S] cluster.

It catalyses the reaction 5-amino-1-(5-phospho-beta-D-ribosyl)imidazole + S-adenosyl-L-methionine = 4-amino-2-methyl-5-(phosphooxymethyl)pyrimidine + CO + 5'-deoxyadenosine + formate + L-methionine + 3 H(+). Its pathway is cofactor biosynthesis; thiamine diphosphate biosynthesis. Its function is as follows. Catalyzes the synthesis of the hydroxymethylpyrimidine phosphate (HMP-P) moiety of thiamine from aminoimidazole ribotide (AIR) in a radical S-adenosyl-L-methionine (SAM)-dependent reaction. The polypeptide is Phosphomethylpyrimidine synthase (Desulfitobacterium hafniense (strain DSM 10664 / DCB-2)).